The primary structure comprises 373 residues: Erythronate-4-phosphate dehydrogenase (373 aa).

Substrate contacts are provided by Ser-45 and Thr-67. NAD(+) contacts are provided by residues Asp-147, 206–208 (ASR), and Asp-232. Arg-208 is a catalytic residue. Glu-237 is an active-site residue. His-254 functions as the Proton donor in the catalytic mechanism. Residue Gly-257 participates in NAD(+) binding. Position 258 (Tyr-258) interacts with substrate.

It belongs to the D-isomer specific 2-hydroxyacid dehydrogenase family. PdxB subfamily. Homodimer.

It is found in the cytoplasm. It catalyses the reaction 4-phospho-D-erythronate + NAD(+) = (R)-3-hydroxy-2-oxo-4-phosphooxybutanoate + NADH + H(+). It participates in cofactor biosynthesis; pyridoxine 5'-phosphate biosynthesis; pyridoxine 5'-phosphate from D-erythrose 4-phosphate: step 2/5. In terms of biological role, catalyzes the oxidation of erythronate-4-phosphate to 3-hydroxy-2-oxo-4-phosphonooxybutanoate. The sequence is that of Erythronate-4-phosphate dehydrogenase from Tolumonas auensis (strain DSM 9187 / NBRC 110442 / TA 4).